An 86-amino-acid chain; its full sequence is Large ribosomal subunit protein bL31B (86 aa).

It belongs to the bacterial ribosomal protein bL31 family. Type B subfamily. In terms of assembly, part of the 50S ribosomal subunit.

The sequence is that of Large ribosomal subunit protein bL31B from Salmonella agona (strain SL483).